The sequence spans 312 residues: Ribonuclease Z (312 aa).

Residues His-62, His-64, Asp-66, His-67, His-144, Asp-215, and His-273 each contribute to the Zn(2+) site. Catalysis depends on Asp-66, which acts as the Proton acceptor.

The protein belongs to the RNase Z family. Homodimer. Zn(2+) is required as a cofactor.

The enzyme catalyses Endonucleolytic cleavage of RNA, removing extra 3' nucleotides from tRNA precursor, generating 3' termini of tRNAs. A 3'-hydroxy group is left at the tRNA terminus and a 5'-phosphoryl group is left at the trailer molecule.. Zinc phosphodiesterase, which displays some tRNA 3'-processing endonuclease activity. Probably involved in tRNA maturation, by removing a 3'-trailer from precursor tRNA. This is Ribonuclease Z from Prochlorococcus marinus subsp. pastoris (strain CCMP1986 / NIES-2087 / MED4).